Consider the following 160-residue polypeptide: Transcriptional repressor NrdR (160 aa).

Residues 3-34 (CPRCHHNNSRVIDSRQADDGRAIRRRRECENC) fold into a zinc finger. An ATP-cone domain is found at 49–139 (LLVIKKNGDR…VYRQFKDMSV (91 aa)).

The protein belongs to the NrdR family. It depends on Zn(2+) as a cofactor.

Functionally, negatively regulates transcription of bacterial ribonucleotide reductase nrd genes and operons by binding to NrdR-boxes. The polypeptide is Transcriptional repressor NrdR (Enterococcus faecalis (strain ATCC 700802 / V583)).